The primary structure comprises 475 residues: Ribulose bisphosphate carboxylase large chain (475 aa).

Positions 1-2 are excised as a propeptide; it reads MS. Proline 3 is subject to N-acetylproline. Residue lysine 14 is modified to N6,N6,N6-trimethyllysine. Substrate contacts are provided by asparagine 123 and threonine 173. The active-site Proton acceptor is lysine 175. Position 177 (lysine 177) interacts with substrate. Mg(2+)-binding residues include lysine 201, aspartate 203, and glutamate 204. Lysine 201 is modified (N6-carboxylysine). Histidine 294 (proton acceptor) is an active-site residue. Substrate-binding residues include arginine 295, histidine 327, and serine 379.

It belongs to the RuBisCO large chain family. Type I subfamily. As to quaternary structure, heterohexadecamer of 8 large chains and 8 small chains; disulfide-linked. The disulfide link is formed within the large subunit homodimers. Requires Mg(2+) as cofactor. The disulfide bond which can form in the large chain dimeric partners within the hexadecamer appears to be associated with oxidative stress and protein turnover.

Its subcellular location is the plastid. It is found in the chloroplast. It carries out the reaction 2 (2R)-3-phosphoglycerate + 2 H(+) = D-ribulose 1,5-bisphosphate + CO2 + H2O. The enzyme catalyses D-ribulose 1,5-bisphosphate + O2 = 2-phosphoglycolate + (2R)-3-phosphoglycerate + 2 H(+). Its function is as follows. RuBisCO catalyzes two reactions: the carboxylation of D-ribulose 1,5-bisphosphate, the primary event in carbon dioxide fixation, as well as the oxidative fragmentation of the pentose substrate in the photorespiration process. Both reactions occur simultaneously and in competition at the same active site. The protein is Ribulose bisphosphate carboxylase large chain of Castanea sativa (Sweet chestnut).